Consider the following 146-residue polypeptide: 3-dehydroquinate dehydratase (146 aa).

The active-site Proton acceptor is Y22. The substrate site is built by N73, H79, and D86. H99 (proton donor) is an active-site residue. Substrate-binding positions include 100-101 (IS) and R110.

Belongs to the type-II 3-dehydroquinase family. As to quaternary structure, homododecamer.

It carries out the reaction 3-dehydroquinate = 3-dehydroshikimate + H2O. Its pathway is metabolic intermediate biosynthesis; chorismate biosynthesis; chorismate from D-erythrose 4-phosphate and phosphoenolpyruvate: step 3/7. In terms of biological role, catalyzes a trans-dehydration via an enolate intermediate. The protein is 3-dehydroquinate dehydratase of Prochlorococcus marinus (strain MIT 9515).